The sequence spans 424 residues: 3-ketoacyl-CoA thiolase, peroxisomal (424 aa).

The N-terminal 26 residues, 1–26, are a transit peptide targeting the peroxisome; the sequence is MQRLQVVLGHLRGPADSGWMPQAAPC. Residues 1 to 26 form a PTS2-type peroxisomal targeting signal region; it reads MQRLQVVLGHLRGPADSGWMPQAAPC. A phosphothreonine mark is found at threonine 59 and threonine 60. The active-site Acyl-thioester intermediate is the cysteine 123. Residues histidine 377 and cysteine 408 each act as proton acceptor in the active site.

It belongs to the thiolase-like superfamily. Thiolase family. Homodimer. Interacts (via PTS2-type peroxisomal targeting signal region) with PEX7; leading to its translocation into peroxisomes.

It is found in the peroxisome. The catalysed reaction is an acyl-CoA + acetyl-CoA = a 3-oxoacyl-CoA + CoA. It carries out the reaction 2 acetyl-CoA = acetoacetyl-CoA + CoA. The enzyme catalyses tetradecanoyl-CoA + acetyl-CoA = 3-oxohexadecanoyl-CoA + CoA. It catalyses the reaction hexanoyl-CoA + acetyl-CoA = 3-oxooctanoyl-CoA + CoA. The catalysed reaction is 3-oxohexadecanedioyl-CoA + CoA = tetradecanedioyl-CoA + acetyl-CoA. It carries out the reaction 3-oxo-(6Z,9Z,12Z,15Z,18Z,21Z)-tetracosahexaenoyl-CoA + CoA = (4Z,7Z,10Z,13Z,16Z,19Z)-docosahexaenoyl-CoA + acetyl-CoA. Its pathway is lipid metabolism; peroxisomal fatty acid beta-oxidation. Functionally, responsible for the thiolytic cleavage of straight chain 3-keto fatty acyl-CoAs (3-oxoacyl-CoAs). Plays an important role in fatty acid peroxisomal beta-oxidation. Catalyzes the cleavage of short, medium, long, and very long straight chain 3-oxoacyl-CoAs. In Homo sapiens (Human), this protein is 3-ketoacyl-CoA thiolase, peroxisomal.